The following is a 142-amino-acid chain: Universal stress protein C (142 aa).

It belongs to the universal stress protein A family.

Its subcellular location is the cytoplasm. In terms of biological role, required for resistance to DNA-damaging agents. The polypeptide is Universal stress protein C (uspC) (Escherichia coli O157:H7).